A 75-amino-acid polypeptide reads, in one-letter code: DNA-directed RNA polymerase subunit epsilon (75 aa).

It belongs to the RNA polymerase subunit epsilon family. RNAP is composed of a core of 2 alpha, a beta and a beta' subunit. The core is associated with a delta subunit, and at least one of epsilon or omega. When a sigma factor is associated with the core the holoenzyme is formed, which can initiate transcription.

The enzyme catalyses RNA(n) + a ribonucleoside 5'-triphosphate = RNA(n+1) + diphosphate. A non-essential component of RNA polymerase (RNAP). In Lactobacillus gasseri (strain ATCC 33323 / DSM 20243 / BCRC 14619 / CIP 102991 / JCM 1131 / KCTC 3163 / NCIMB 11718 / NCTC 13722 / AM63), this protein is DNA-directed RNA polymerase subunit epsilon.